Here is a 218-residue protein sequence, read N- to C-terminus: Ras-related protein Rab-42 (218 aa).

Positions 19, 21, 22, 23, and 46 each coordinate GTP. Mg(2+) is bound by residues Thr-23, Thr-46, and Asp-70. 5 residues coordinate GTP: Gly-73, Lys-130, Asp-132, Val-160, and Lys-161. 2 S-geranylgeranyl cysteine lipidation sites follow: Cys-216 and Cys-218.

It belongs to the small GTPase superfamily. Rab family. It depends on Mg(2+) as a cofactor.

The protein localises to the membrane. It catalyses the reaction GTP + H2O = GDP + phosphate + H(+). Its activity is regulated as follows. Regulated by guanine nucleotide exchange factors (GEFs) which promote the exchange of bound GDP for free GTP. Regulated by GTPase activating proteins (GAPs) which increase the GTP hydrolysis activity. Inhibited by GDP dissociation inhibitors (GDIs). Functionally, the small GTPases Rab are key regulators of intracellular membrane trafficking, from the formation of transport vesicles to their fusion with membranes. Rabs cycle between an inactive GDP-bound form and an active GTP-bound form that is able to recruit to membranes different sets of downstream effectors directly responsible for vesicle formation, movement, tethering and fusion. The physiological function of RAB42 remains undefined. In Homo sapiens (Human), this protein is Ras-related protein Rab-42.